Reading from the N-terminus, the 349-residue chain is Core protein VP7 (349 aa).

N-linked (GlcNAc...) asparagine; by host glycosylation is present at asparagine 287.

Belongs to the orbivirus VP7 family. Homotrimer that assemble in a complex of 260 capsomers on an inner scaffold composed of VP3.

The protein resides in the virion. In terms of biological role, the VP7 protein is one of the five proteins (with VP1, VP3, VP4, and VP6) which form the inner capsid of the virus. In Antilocapra americana (Pronghorn), this protein is Core protein VP7 (Segment-7).